Here is a 519-residue protein sequence, read N- to C-terminus: MDLVRVASPEPGPAAAWGPNKCPWATPQNTISCSLSDVMSEQLAKELQLEEEAAAFPEVTVAEGPFITGENIDTSSDLMLAQMLQMEFDREYDAQLRREEKKFNGDSKVCISFENYRKVHPYEDSDSSEDEVDWQDTRDDPYRPAKPIPTPKKGFIGKGKDITTKHDEVVCGRKNTARMENFAPGFQVGDGIGMDLKLSNHVFNALKQHAYSEERRSARLHEKKEHSTAEKAVDPKTRLLMYKMVNSGMLETITGCISTGKESVVFHAYGGSMEDGKEDSKVIPTECAIKVFKTTLNEFKNRDKYIKDDFRFKDRFSKLNPRKIIRMWAEKEMHNLTRMQRAGIPCPTVVLLKKHILVMSFIGHDQVPAPKLKEVKLSSEEMKDAYYQTLHLMQQLYDECTLVHADLSEYNMLWHAGKVWLIDVSQSVEPTHPHGLEFLFRDCRNVSQFFQKGGVKEALGERELFNAVSGLNISADNEADFLAEIEALEKMNEDHVQKNGRKAASFLKDDGGPPILYDE.

A phosphoserine mark is found at S8 and S112. Residue Y122 is modified to Phosphotyrosine. The tract at residues 122-159 (YEDSDSSEDEVDWQDTRDDPYRPAKPIPTPKKGFIGKG) is disordered. The span at 124–134 (DSDSSEDEVDW) shows a compositional bias: acidic residues. Phosphoserine occurs at positions 125, 127, and 128. The 269-residue stretch at 251–519 (ETITGCISTG…DGGPPILYDE (269 aa)) folds into the Protein kinase domain. ATP is bound by residues 257-265 (ISTGKESVV) and K290. Residue D406 is the Proton acceptor of the active site.

This sequence belongs to the protein kinase superfamily. RIO-type Ser/Thr kinase family. As to quaternary structure, interacts with CASP10. Interacts with IRF3; RIOK3 probably mediates the interaction of TBK1 with IRF3. Associated with 40S pre-ribosomal particles. Mg(2+) is required as a cofactor. Post-translationally, autophosphorylated (in vitro).

The protein resides in the cytoplasm. The enzyme catalyses L-seryl-[protein] + ATP = O-phospho-L-seryl-[protein] + ADP + H(+). It carries out the reaction L-threonyl-[protein] + ATP = O-phospho-L-threonyl-[protein] + ADP + H(+). Its function is as follows. Involved in regulation of type I interferon (IFN)-dependent immune response which plays a critical role in the innate immune response against DNA and RNA viruses. May act as an adapter protein essential for the recruitment of TBK1 to IRF3. Phosphorylates IFIH1 within the C-terminal region interfering with IFIH1 filament assembly on long dsRNA and resulting in attenuated IFIH1-signaling. Can inhibit CASP10 isoform 7-mediated activation of the NF-kappaB signaling pathway. May play a role in the biogenesis of the 40S ribosomal subunit. Involved in the processing of 21S pre-rRNA to the mature 18S rRNA. The polypeptide is Serine/threonine-protein kinase RIO3 (RIOK3) (Bos taurus (Bovine)).